Here is a 161-residue protein sequence, read N- to C-terminus: 2-C-methyl-D-erythritol 2,4-cyclodiphosphate synthase (161 aa).

A divalent metal cation contacts are provided by aspartate 10 and histidine 12. 4-CDP-2-C-methyl-D-erythritol 2-phosphate contacts are provided by residues 10–12 (DVH) and 36–37 (HS). Histidine 44 lines the a divalent metal cation pocket. 4-CDP-2-C-methyl-D-erythritol 2-phosphate-binding positions include 58–60 (DIG), 63–67 (FSDTD), and arginine 144.

It belongs to the IspF family. As to quaternary structure, homotrimer. It depends on a divalent metal cation as a cofactor.

It carries out the reaction 4-CDP-2-C-methyl-D-erythritol 2-phosphate = 2-C-methyl-D-erythritol 2,4-cyclic diphosphate + CMP. It participates in isoprenoid biosynthesis; isopentenyl diphosphate biosynthesis via DXP pathway; isopentenyl diphosphate from 1-deoxy-D-xylulose 5-phosphate: step 4/6. Functionally, involved in the biosynthesis of isopentenyl diphosphate (IPP) and dimethylallyl diphosphate (DMAPP), two major building blocks of isoprenoid compounds. Catalyzes the conversion of 4-diphosphocytidyl-2-C-methyl-D-erythritol 2-phosphate (CDP-ME2P) to 2-C-methyl-D-erythritol 2,4-cyclodiphosphate (ME-CPP) with a corresponding release of cytidine 5-monophosphate (CMP). The protein is 2-C-methyl-D-erythritol 2,4-cyclodiphosphate synthase of Burkholderia lata (strain ATCC 17760 / DSM 23089 / LMG 22485 / NCIMB 9086 / R18194 / 383).